Reading from the N-terminus, the 302-residue chain is Nucleotide-binding protein Strop_3101 (302 aa).

26-33 contacts ATP; that stretch reads GVSGGGRS. Residue 77 to 80 participates in GTP binding; that stretch reads DVRS.

Belongs to the RapZ-like family.

Functionally, displays ATPase and GTPase activities. The sequence is that of Nucleotide-binding protein Strop_3101 from Salinispora tropica (strain ATCC BAA-916 / DSM 44818 / JCM 13857 / NBRC 105044 / CNB-440).